A 162-amino-acid chain; its full sequence is Peptide deformylase (162 aa).

Cys86 and His128 together coordinate Fe cation. Glu129 is a catalytic residue. His132 provides a ligand contact to Fe cation.

It belongs to the polypeptide deformylase family. The cofactor is Fe(2+).

The catalysed reaction is N-terminal N-formyl-L-methionyl-[peptide] + H2O = N-terminal L-methionyl-[peptide] + formate. In terms of biological role, removes the formyl group from the N-terminal Met of newly synthesized proteins. Requires at least a dipeptide for an efficient rate of reaction. N-terminal L-methionine is a prerequisite for activity but the enzyme has broad specificity at other positions. This is Peptide deformylase from Treponema pallidum (strain Nichols).